The following is a 126-amino-acid chain: Large ribosomal subunit protein bL17 (126 aa).

The protein belongs to the bacterial ribosomal protein bL17 family. As to quaternary structure, part of the 50S ribosomal subunit. Contacts protein L32.

The protein is Large ribosomal subunit protein bL17 of Lysinibacillus sphaericus (strain C3-41).